Here is a 704-residue protein sequence, read N- to C-terminus: Polyribonucleotide nucleotidyltransferase (704 aa).

Asp488 and Asp494 together coordinate Mg(2+). A KH domain is found at Pro555 to Ile614. The S1 motif domain maps to Gly624 to Lys692.

This sequence belongs to the polyribonucleotide nucleotidyltransferase family. As to quaternary structure, component of the RNA degradosome, which is a multiprotein complex involved in RNA processing and mRNA degradation. Requires Mg(2+) as cofactor.

It localises to the cytoplasm. It carries out the reaction RNA(n+1) + phosphate = RNA(n) + a ribonucleoside 5'-diphosphate. Its function is as follows. Involved in mRNA degradation. Catalyzes the phosphorolysis of single-stranded polyribonucleotides processively in the 3'- to 5'-direction. This is Polyribonucleotide nucleotidyltransferase from Shewanella sediminis (strain HAW-EB3).